A 529-amino-acid polypeptide reads, in one-letter code: Fibroblast growth factor receptor-like 1 (529 aa).

Positions 1-20 (MTRSPALLLLLLGALPSAEA) are cleaved as a signal peptide. Topologically, residues 21-374 (ARGPPRMADK…SSSSTSLPWP (354 aa)) are extracellular. 3 Ig-like C2-type domains span residues 25–111 (PRMA…YTLI), 143–233 (PRFT…YKVD), and 242–350 (PVLT…AFLT). C47 and C95 form a disulfide bridge. A glycan (N-linked (GlcNAc...) asparagine) is linked at N107. The segment at 116 to 151 (ISPGKESPGPGGSSGGQEDPASQQWARPRFTQPSKM) is disordered. C168 and C217 are joined by a disulfide. N-linked (GlcNAc...) asparagine glycosylation is found at N227, N251, and N289. C264 and C334 are joined by a disulfide. The chain crosses the membrane as a helical span at residues 375–395 (VVIGIPAGAVFILGTVLLWLC). The Cytoplasmic portion of the chain corresponds to 396-529 (QTKKKPCAPA…RIENNGGRVS (134 aa)). Positions 405–427 (ASTLPVPGHRPPGTSRERSGDKD) are disordered.

In terms of assembly, interacts with FGF2 with a low affinity. Highly expressed in the kidney, brain and lung. Weakly expressed in the muscle, thymus, lymph node, stomach, intestine, colon and liver. Expressed in fetal cartilaginous structures like the nasal cartilage, the ribs and the sternum as well as in the cartilaginous rudiments of developing bones such as the vertebrae and the pelvic bone. High expression is found in the muscles of the tongue and the diaphragm.

Its subcellular location is the cell membrane. Its function is as follows. Has a negative effect on cell proliferation. The sequence is that of Fibroblast growth factor receptor-like 1 (Fgfrl1) from Mus musculus (Mouse).